The sequence spans 196 residues: Pyridoxal 5'-phosphate synthase subunit PdxT (196 aa).

47–49 (GES) contributes to the L-glutamine binding site. Cys79 acts as the Nucleophile in catalysis. L-glutamine-binding positions include Arg106 and 134–135 (IR). Residues His170 and Glu172 each act as charge relay system in the active site.

The protein belongs to the glutaminase PdxT/SNO family. In the presence of PdxS, forms a dodecamer of heterodimers. Only shows activity in the heterodimer.

The catalysed reaction is aldehydo-D-ribose 5-phosphate + D-glyceraldehyde 3-phosphate + L-glutamine = pyridoxal 5'-phosphate + L-glutamate + phosphate + 3 H2O + H(+). It carries out the reaction L-glutamine + H2O = L-glutamate + NH4(+). Its pathway is cofactor biosynthesis; pyridoxal 5'-phosphate biosynthesis. Functionally, catalyzes the hydrolysis of glutamine to glutamate and ammonia as part of the biosynthesis of pyridoxal 5'-phosphate. The resulting ammonia molecule is channeled to the active site of PdxS. The sequence is that of Pyridoxal 5'-phosphate synthase subunit PdxT from Bacillus cereus (strain ZK / E33L).